We begin with the raw amino-acid sequence, 959 residues long: Autophagy-related protein 18g (959 aa).

WD repeat units lie at residues 376-416 (AHTS…SHNA) and 438-479 (ITSA…AAFQ). A disordered region spans residues 802-832 (GSIESAESSEEGSTKQMENLHDSDHMSNSIK).

It belongs to the WD repeat PROPPIN family. Component of the PI(3,5)P2 regulatory complex at least composed of ATG18, SAC/FIG4, FAB1 and VAC14. In terms of tissue distribution, expressed in leaves.

The protein localises to the preautophagosomal structure membrane. The protein resides in the vacuole membrane. Functionally, the PI(3,5)P2 regulatory complex regulates both the synthesis and turnover of phosphatidylinositol 3,5-bisphosphate (PtdIns(3,5)P2). Required for autophagy. The protein is Autophagy-related protein 18g (ATG18G) of Arabidopsis thaliana (Mouse-ear cress).